Consider the following 39-residue polypeptide: Cytochrome b559 subunit beta (39 aa).

Residues 14-30 (WLAVHGLAVPTVSFLGS) form a helical membrane-spanning segment. Heme is bound at residue His-18.

Belongs to the PsbE/PsbF family. Heterodimer of an alpha subunit and a beta subunit. PSII is composed of 1 copy each of membrane proteins PsbA, PsbB, PsbC, PsbD, PsbE, PsbF, PsbH, PsbI, PsbJ, PsbK, PsbL, PsbM, PsbT, PsbX, PsbY, PsbZ, Psb30/Ycf12, at least 3 peripheral proteins of the oxygen-evolving complex and a large number of cofactors. It forms dimeric complexes. Requires heme b as cofactor.

The protein localises to the plastid. It is found in the chloroplast thylakoid membrane. This b-type cytochrome is tightly associated with the reaction center of photosystem II (PSII). PSII is a light-driven water:plastoquinone oxidoreductase that uses light energy to abstract electrons from H(2)O, generating O(2) and a proton gradient subsequently used for ATP formation. It consists of a core antenna complex that captures photons, and an electron transfer chain that converts photonic excitation into a charge separation. The polypeptide is Cytochrome b559 subunit beta (Lotus japonicus (Lotus corniculatus var. japonicus)).